The following is a 359-amino-acid chain: Peptide chain release factor 1 (359 aa).

At glutamine 235 the chain carries N5-methylglutamine.

It belongs to the prokaryotic/mitochondrial release factor family. Methylated by PrmC. Methylation increases the termination efficiency of RF1.

The protein localises to the cytoplasm. Its function is as follows. Peptide chain release factor 1 directs the termination of translation in response to the peptide chain termination codons UAG and UAA. This is Peptide chain release factor 1 from Anaplasma phagocytophilum (strain HZ).